We begin with the raw amino-acid sequence, 94 residues long: Enhancer of yellow 2 transcription factor (94 aa).

The protein belongs to the ENY2 family. As to quaternary structure, component of the nuclear pore complex (NPC)-associated AMEX complex (anchoring and mRNA export complex), composed of at least e(y)2 and xmas-2. Component of the SAGA transcription coactivator-HAT complexes, at least composed of Ada2b, e(y)2, Pcaf/Gcn5, Taf10 and Nipped-A/Trrap. Within the SAGA complex, e(y)2, Sgf11, and not/nonstop form an additional subcomplex of SAGA called the DUB module (deubiquitination module). Component of the THO complex, composed of at least e(y)2, HPR1, THO2, THOC5, THOC6 and THOC7. Interacts with e(y)1. Interacts with su(Hw) (via zinc fingers). Interacts with xmas-2; required for localization to the nuclear periphery. Interacts with the nuclear pore complex (NPC).

The protein localises to the nucleus. It localises to the nucleoplasm. The protein resides in the cytoplasm. Involved in mRNA export coupled transcription activation by association with both the AMEX and the SAGA complexes. The SAGA complex is a multiprotein complex that activates transcription by remodeling chromatin and mediating histone acetylation and deubiquitination. Within the SAGA complex, participates in a subcomplex that specifically deubiquitinates histone H2B. The SAGA complex is recruited to specific gene promoters by activators, where it is required for transcription. Required for nuclear receptor-mediated transactivation. Involved in transcription elongation by recruiting the THO complex onto nascent mRNA. The AMEX complex functions in docking export-competent ribonucleoprotein particles (mRNPs) to the nuclear entrance of the nuclear pore complex (nuclear basket). AMEX participates in mRNA export and accurate chromatin positioning in the nucleus by tethering genes to the nuclear periphery. The sequence is that of Enhancer of yellow 2 transcription factor from Drosophila mojavensis (Fruit fly).